The following is a 753-amino-acid chain: Dolichyl-phosphate-mannose--protein mannosyltransferase 3 (753 aa).

Residues 1 to 50 (MPYRVATGYSEKSTDDDLIWRTPIVKEELEDADNFLKDDAELYDKVKNES) are Cytoplasmic-facing. A helical transmembrane segment spans residues 51 to 71 (AVSHLDTIVMPIIFTVLGMFT). At 72–148 (RMYKIGRNNH…IDYVKMRLFQ (77 aa)) the chain is on the lumenal side. Asparagine 124 is a glycosylation site (N-linked (GlcNAc...) asparagine). Residues 149-169 (AMFSSLCVPLAYFTGRAIGFS) form a helical membrane-spanning segment. The Cytoplasmic segment spans residues 170–174 (RLSVW). Residues 175 to 195 (LFTILVIFENSYATLGKFILL) traverse the membrane as a helical segment. Residues 196–235 (DSMLLFFTVSSYFCLAKFHTMRKSPFSARWWLWLCLTGLN) lie on the Lumenal side of the membrane. The chain crosses the membrane as a helical span at residues 236–256 (LGCAISVKMVGLFIISVVGIY). Over 257-282 (TISELWNLLSDRSVSWKVYVNHWLAR) the chain is Cytoplasmic. Residues 283 to 303 (IFGLIIIPVCVFLLCFKIHFD) form a helical membrane-spanning segment. The Lumenal segment spans residues 304 to 602 (LLSNSGPGDS…IKYFLLGSPA (299 aa)). N-linked (GlcNAc...) asparagine glycosylation is present at asparagine 324. The 56-residue stretch at 332 to 387 (PRDVALGSSIISIKNQALGGALLHSHVQPFPEGSEQQQVTVYGYSDANNEWFFQRI) folds into the MIR 1 domain. Asparagine 398 carries N-linked (GlcNAc...) asparagine glycosylation. MIR domains lie at 401–457 (IEFV…IEIV) and 465–523 (PTLL…IETH). The helical transmembrane segment at 603–623 (SVWPSSIAVCALIIHVIFLTL) threads the bilayer. At 624-639 (KWQRQCVILSDPVERD) the chain is on the cytoplasmic side. The chain crosses the membrane as a helical span at residues 640–660 (VFVMAAFYPLLAWLLHYMPFV). Topologically, residues 661–665 (VMSRV) are lumenal. A helical membrane pass occupies residues 666-686 (VYAHHYLPTLYFALMILSYYF). At 687-703 (DMITKRWATRNTGKFLR) the chain is on the cytoplasmic side. A helical membrane pass occupies residues 704–724 (LGAYIVYGSIVIAGFFYFSPF). The Lumenal segment spans residues 725–753 (SFGMDGPVDDYAYLAWLPTWQIVEDIRNT).

Belongs to the glycosyltransferase 39 family. PMT3 and PMT5 form a functional heterodimer. Also forms a minor complex with PMT1.

The protein localises to the endoplasmic reticulum membrane. The enzyme catalyses a di-trans,poly-cis-dolichyl beta-D-mannosyl phosphate + L-seryl-[protein] = 3-O-(alpha-D-mannosyl)-L-seryl-[protein] + a di-trans,poly-cis-dolichyl phosphate + H(+). The catalysed reaction is a di-trans,poly-cis-dolichyl beta-D-mannosyl phosphate + L-threonyl-[protein] = 3-O-(alpha-D-mannosyl)-L-threonyl-[protein] + a di-trans,poly-cis-dolichyl phosphate + H(+). Its pathway is protein modification; protein glycosylation. Protein O-mannosyltransferase involved in O-glycosylation which is essential for cell wall rigidity. Forms a heterodimeric complex with PMT5 and more rarely with PMT1 to transfer mannose from Dol-P-mannose to Ser or Thr residues on proteins. Seems to have redundant activity to PMT2. The sequence is that of Dolichyl-phosphate-mannose--protein mannosyltransferase 3 from Saccharomyces cerevisiae (strain ATCC 204508 / S288c) (Baker's yeast).